The primary structure comprises 152 residues: Ribonuclease H (152 aa).

The RNase H type-1 domain occupies 1–142; sequence MDSKVVIYTD…ADKLAVQGRE (142 aa). Residues Asp-10, Glu-48, Asp-70, and Asp-134 each contribute to the Mg(2+) site.

It belongs to the RNase H family. In terms of assembly, monomer. The cofactor is Mg(2+).

Its subcellular location is the cytoplasm. The enzyme catalyses Endonucleolytic cleavage to 5'-phosphomonoester.. Endonuclease that specifically degrades the RNA of RNA-DNA hybrids. This chain is Ribonuclease H, found in Rickettsia typhi (strain ATCC VR-144 / Wilmington).